Reading from the N-terminus, the 23-residue chain is Clavanin-B (23 aa).

Position 23 is a phenylalanine amide (Phe-23).

It localises to the secreted. Has antimicrobial activity. The sequence is that of Clavanin-B from Styela clava (Sea squirt).